We begin with the raw amino-acid sequence, 466 residues long: uncharacterized protein (466 aa).

The 196-residue stretch at Asn-4–Leu-199 folds into the C2 NT-type domain. Disordered regions lie at residues Ala-262–Ile-298, Leu-374–Met-393, and Glu-400–Arg-452. Polar residues predominate over residues Thr-266–Ile-298. 2 positions are modified to phosphoserine: Ser-433 and Ser-439.

This sequence to S.pombe SpCC1494.08c.

This is an uncharacterized protein from Saccharomyces cerevisiae (strain ATCC 204508 / S288c) (Baker's yeast).